We begin with the raw amino-acid sequence, 656 residues long: Leucine-rich repeat-containing protein 43 (656 aa).

Over residues 1–13 (MEASYESESESES) the composition is skewed to acidic residues. The segment at 1–25 (MEASYESESESESEAGPGTQRPGTG) is disordered. LRR repeat units lie at residues 150 to 170 (KLEELVLSANRIKEVDATNLP), 172 to 193 (TLKVLELYGNEISSMECLCAHP), 196 to 215 (GLQHLGLGHNKLLGPLESLY), and 223 to 244 (NLVSLDLGFNDLTDLQSMVTSL). An LRRCT domain is found at 258-296 (NPLALVPYYRGLTIDSLAQLCVLDDITVSPNEKHLFRGL). The segment at 512–554 (LSAKKGKGEKDKKGKEKDRTGKGEKEPAKEWKVLKKKKEPPKE) is disordered. A compositionally biased stretch (basic and acidic residues) spans 517 to 544 (GKGEKDKKGKEKDRTGKGEKEPAKEWKV).

The sequence is that of Leucine-rich repeat-containing protein 43 (LRRC43) from Homo sapiens (Human).